The following is a 323-amino-acid chain: E3 ubiquitin-protein ligase SIRP1 (323 aa).

Residues 199 to 240 (CSVCLDDLEVGSQAKQMPCEHKFHSSCILPWLELHSSCPVCR) form an RING-type; atypical zinc finger. 2 disordered regions span residues 248–280 (TKDL…ESSN) and 296–323 (REAQ…AGHS). A compositionally biased stretch (basic and acidic residues) spans 259 to 269 (RVEDSHEEVRA).

The protein localises to the cytoplasm. It carries out the reaction S-ubiquitinyl-[E2 ubiquitin-conjugating enzyme]-L-cysteine + [acceptor protein]-L-lysine = [E2 ubiquitin-conjugating enzyme]-L-cysteine + N(6)-ubiquitinyl-[acceptor protein]-L-lysine.. It participates in protein modification; protein ubiquitination. In terms of biological role, possesses E3 ubiqutin-protein ligase activity in vitro. Acts as negative regulator of salinity stress tolerance mediated by the ubiquitin-proteasome degradation pathway. The polypeptide is E3 ubiquitin-protein ligase SIRP1 (Oryza sativa subsp. japonica (Rice)).